A 232-amino-acid polypeptide reads, in one-letter code: Orotate phosphoribosyltransferase (232 aa).

5-phospho-alpha-D-ribose 1-diphosphate contacts are provided by residues R107, K108, K111, and 133-141 (EDLTTDGGS). Orotate is bound at residue T137.

This sequence belongs to the purine/pyrimidine phosphoribosyltransferase family. PyrE subfamily. Homodimer. Requires Mg(2+) as cofactor.

The enzyme catalyses orotidine 5'-phosphate + diphosphate = orotate + 5-phospho-alpha-D-ribose 1-diphosphate. Its pathway is pyrimidine metabolism; UMP biosynthesis via de novo pathway; UMP from orotate: step 1/2. In terms of biological role, catalyzes the transfer of a ribosyl phosphate group from 5-phosphoribose 1-diphosphate to orotate, leading to the formation of orotidine monophosphate (OMP). The chain is Orotate phosphoribosyltransferase from Cereibacter sphaeroides (strain ATCC 17029 / ATH 2.4.9) (Rhodobacter sphaeroides).